A 122-amino-acid chain; its full sequence is Prefoldin subunit 1 (122 aa).

The residue at position 2 (Ala-2) is an N-acetylalanine.

Belongs to the prefoldin subunit beta family. As to quaternary structure, heterohexamer of two PFD-alpha type and four PFD-beta type subunits.

Binds specifically to cytosolic chaperonin (c-CPN) and transfers target proteins to it. Binds to nascent polypeptide chain and promotes folding in an environment in which there are many competing pathways for nonnative proteins. The sequence is that of Prefoldin subunit 1 (Pfdn1) from Mus musculus (Mouse).